The sequence spans 525 residues: Bifunctional pantoate ligase/cytidylate kinase (525 aa).

A pantoate--beta-alanine ligase region spans residues 1–292 (MDNVPIIRTV…VGSARLIDNM (292 aa)). Position 44 to 51 (44 to 51 (MGALHAGH)) interacts with ATP. His51 acts as the Proton donor in catalysis. Gln75 is a (R)-pantoate binding site. Gln75 contacts beta-alanine. 162 to 165 (GQKD) serves as a coordination point for ATP. (R)-pantoate is bound at residue Gln168. ATP-binding positions include Ile191 and 199-202 (LSSR). The segment at 293–525 (LLDARLPILA…LYQERFPDRA (233 aa)) is cytidylate kinase.

In the N-terminal section; belongs to the pantothenate synthetase family. It in the C-terminal section; belongs to the cytidylate kinase family. Type 1 subfamily.

Its subcellular location is the cytoplasm. It carries out the reaction (R)-pantoate + beta-alanine + ATP = (R)-pantothenate + AMP + diphosphate + H(+). The enzyme catalyses CMP + ATP = CDP + ADP. The catalysed reaction is dCMP + ATP = dCDP + ADP. It functions in the pathway cofactor biosynthesis; (R)-pantothenate biosynthesis; (R)-pantothenate from (R)-pantoate and beta-alanine: step 1/1. In terms of biological role, catalyzes the condensation of pantoate with beta-alanine in an ATP-dependent reaction via a pantoyl-adenylate intermediate. Its function is as follows. Catalyzes the transfer of a phosphate group from ATP to either CMP or dCMP to form CDP or dCDP and ADP, respectively. The protein is Bifunctional pantoate ligase/cytidylate kinase of Acaryochloris marina (strain MBIC 11017).